We begin with the raw amino-acid sequence, 408 residues long: Peptidase T (408 aa).

Zn(2+) is bound at residue His-78. Asp-80 is a catalytic residue. Zn(2+) is bound at residue Asp-140. Glu-173 acts as the Proton acceptor in catalysis. Residues Glu-174, Asp-196, and His-379 each coordinate Zn(2+).

This sequence belongs to the peptidase M20B family. It depends on Zn(2+) as a cofactor.

It is found in the cytoplasm. The enzyme catalyses Release of the N-terminal residue from a tripeptide.. In terms of biological role, cleaves the N-terminal amino acid of tripeptides. This chain is Peptidase T, found in Citrobacter koseri (strain ATCC BAA-895 / CDC 4225-83 / SGSC4696).